The chain runs to 238 residues: Small ribosomal subunit protein uS2 (238 aa).

Belongs to the universal ribosomal protein uS2 family.

The protein is Small ribosomal subunit protein uS2 of Chloroflexus aggregans (strain MD-66 / DSM 9485).